We begin with the raw amino-acid sequence, 200 residues long: Large ribosomal subunit protein bL25 (200 aa).

This sequence belongs to the bacterial ribosomal protein bL25 family. CTC subfamily. Part of the 50S ribosomal subunit; part of the 5S rRNA/L5/L18/L25 subcomplex. Contacts the 5S rRNA. Binds to the 5S rRNA independently of L5 and L18.

Functionally, this is one of the proteins that binds to the 5S RNA in the ribosome where it forms part of the central protuberance. The sequence is that of Large ribosomal subunit protein bL25 from Leifsonia xyli subsp. xyli (strain CTCB07).